The primary structure comprises 158 residues: Small ribosomal subunit protein uS9 (158 aa).

The segment covering 1–20 (MSETMQSLDQLSALKTTQPD) has biased composition (polar residues). The segment at 1–29 (MSETMQSLDQLSALKTTQPDAPTYTKKVD) is disordered.

This sequence belongs to the universal ribosomal protein uS9 family.

This chain is Small ribosomal subunit protein uS9, found in Rhodopseudomonas palustris (strain BisB5).